The following is a 439-amino-acid chain: Perilipin-3 (439 aa).

The segment covering 1 to 19 has biased composition (low complexity); the sequence is MFASETEASASSTQVTTEE. Positions 1-26 are disordered; that stretch reads MFASETEASASSTQVTTEEPVQQPSV. Position 66 is an N6-acetyllysine (Lys66). Position 92 is a phosphoserine (Ser92). Lys123 is covalently cross-linked (Glycyl lysine isopeptide (Lys-Gly) (interchain with G-Cter in SUMO1)). A Phosphoserine modification is found at Ser131. Thr175 is modified (phosphothreonine). Residues Ser180 and Ser184 each carry the phosphoserine modification. Position 221 is a phosphothreonine (Thr221). Residues Ser222 and Ser246 each carry the phosphoserine modification. 2 coiled-coil regions span residues 254-282 and 358-381; these read RAYE…QALS and AHVK…FSGM. Tyr256 carries the phosphotyrosine modification.

The protein belongs to the perilipin family. In terms of assembly, homooligomer. Interacts with M6PR (via the cytoplasmic domain). Interacts with IGF2R (via the cytoplasmic domain). In terms of processing, phosphorylation at Tyr-256 by isoform 1 of CHKA (CHKalpha2) promotes dissociation from lipid droplets: dissociation is followed by recruitment of autophagosome machinery to lipid droplets and subsequent lipid droplet lipolysis.

It localises to the lipid droplet. The protein resides in the endosome membrane. Its subcellular location is the cytoplasm. Its function is as follows. Structural component of lipid droplets, which is required for the formation and maintenance of lipid storage droplets. Required for the transport of mannose 6-phosphate receptors (MPR) from endosomes to the trans-Golgi network. The sequence is that of Perilipin-3 (PLIN3) from Sus scrofa (Pig).